A 534-amino-acid chain; its full sequence is Lysophosphatidylcholine acyltransferase 1 (534 aa).

The segment at 1 to 22 (MRLRGCGPRAAPASSAGASDAR) is disordered. Residues 1–57 (MRLRGCGPRAAPASSAGASDARLLAPPGRNPFVHELRLSALQKAQVALMTLTLFPVR) lie on the Cytoplasmic side of the membrane. Over residues 7-22 (GPRAAPASSAGASDAR) the composition is skewed to low complexity. A helical; Signal-anchor for type II membrane protein membrane pass occupies residues 58–78 (LLVAAAMMLLAWPLALVASLG). Topologically, residues 79–534 (SAEKEPEQPP…GRKPVRKKLD (456 aa)) are lumenal. Positions 135–140 (HSSYFD) match the HXXXXD motif motif. 2 EF-hand domains span residues 379–414 (PVSD…VCRP) and 451–486 (VAEL…YPAF). The Ca(2+) site is built by Asp-392, Ser-394, Ser-396, Glu-398, and Glu-403. A disordered region spans residues 512 to 534 (GFCADFSPENSDAGRKPVRKKLD). Basic and acidic residues predominate over residues 523–534 (DAGRKPVRKKLD). The short motif at 531–534 (KKLD) is the Di-lysine motif element.

Belongs to the 1-acyl-sn-glycerol-3-phosphate acyltransferase family. Erythrocytes.

It localises to the endoplasmic reticulum membrane. The protein resides in the golgi apparatus membrane. It is found in the cell membrane. The protein localises to the lipid droplet. It carries out the reaction a 1-acyl-sn-glycero-3-phosphocholine + an acyl-CoA = a 1,2-diacyl-sn-glycero-3-phosphocholine + CoA. The enzyme catalyses a 1-acyl-sn-glycero-3-phosphate + an acyl-CoA = a 1,2-diacyl-sn-glycero-3-phosphate + CoA. The catalysed reaction is a 1-O-alkyl-sn-glycero-3-phosphocholine + acetyl-CoA = a 1-O-alkyl-2-acetyl-sn-glycero-3-phosphocholine + CoA. It catalyses the reaction a 1-O-(1Z-alkenyl)-sn-glycero-3-phosphocholine + an acyl-CoA = a 1-O-(1Z-alkenyl)-2-acyl-sn-glycero-3-phosphocholine + CoA. It carries out the reaction 1-acyl-sn-glycero-3-phospho-(1'-sn-glycerol) + an acyl-CoA = a 1,2-diacyl-sn-glycero-3-phospho-(1'-sn-glycerol) + CoA. The enzyme catalyses 1-hexadecanoyl-sn-glycero-3-phosphocholine + (9Z)-octadecenoyl-CoA = 1-hexadecanoyl-2-(9Z-octadecenoyl)-sn-glycero-3-phosphocholine + CoA. The catalysed reaction is 1-hexadecanoyl-sn-glycero-3-phosphocholine + hexadecanoyl-CoA = 1,2-dihexadecanoyl-sn-glycero-3-phosphocholine + CoA. It catalyses the reaction 1-O-hexadecyl-sn-glycero-3-phosphocholine + hexadecanoyl-CoA = 1-O-hexadecyl-2-hexadecanoyl-sn-glycero-3-phosphocholine + CoA. It carries out the reaction a 1-O-(1Z-alkenyl)-sn-glycero-3-phosphocholine + hexadecanoyl-CoA = 1-O-(1Z)-alkenyl-2-hexadecanoyl-sn-glycero-3-phosphocholine + CoA. The enzyme catalyses 1-hexadecanoyl-sn-glycero-3-phospho-(1'-sn-glycerol) + hexadecanoyl-CoA = 1,2-dihexadecanoyl-sn-glycero-3-phospho-(1'-sn-glycerol) + CoA. The catalysed reaction is 1-dodecanoyl-sn-glycero-3-phosphocholine + hexadecanoyl-CoA = 1-dodecanoyl-2-hexadecanoyl-sn-glycero-3-phosphocholine + CoA. It catalyses the reaction 1-tetradecanoyl-sn-glycero-3-phosphocholine + hexadecanoyl-CoA = 1-tetradecanoyl-2-hexadecanoyl-sn-glycero-3-phosphocholine + CoA. It carries out the reaction 1-O-octadecyl-sn-glycero-3-phosphocholine + hexadecanoyl-CoA = 1-O-octadecyl-2-hexadecanoyl-sn-glycero-3-phosphocholine + CoA. The enzyme catalyses 1-octadecanoyl-sn-glycero-3-phosphocholine + hexadecanoyl-CoA = 1-octadecanoyl-2-hexadecanoyl-sn-glycero-3-phosphocholine + CoA. The catalysed reaction is 1-(9Z-octadecenoyl)-sn-glycero-3-phosphocholine + hexadecanoyl-CoA = 1-(9Z-octadecenoyl)-2-hexadecanoyl-sn-glycero-3-phosphocholine + CoA. It catalyses the reaction 1-eicosanoyl-sn-glycero-3-phosphocholine + hexadecanoyl-CoA = 1-eicosanoyl-2-hexadecanoyl-sn-glycero-3-phosphocholine + CoA. It carries out the reaction hexanoyl-CoA + 1-hexadecanoyl-sn-glycero-3-phosphocholine = 1-hexadecanoyl-2-hexanoyl-sn-glycero-3-phosphocholine + CoA. The enzyme catalyses octanoyl-CoA + 1-hexadecanoyl-sn-glycero-3-phosphocholine = 1-hexadecanoyl-2-octanoyl-sn-glycero-3-phosphocholine + CoA. The catalysed reaction is decanoyl-CoA + 1-hexadecanoyl-sn-glycero-3-phosphocholine = 1-hexadecanoyl-2-decanoyl-sn-glycero-3-phosphocholine + CoA. It catalyses the reaction dodecanoyl-CoA + 1-hexadecanoyl-sn-glycero-3-phosphocholine = 1-hexadecanoyl-2-dodecanoyl-sn-glycero-3-phosphocholine + CoA. It carries out the reaction tetradecanoyl-CoA + 1-hexadecanoyl-sn-glycero-3-phosphocholine = 1-hexadecanoyl-2-tetradecanoyl-sn-glycero-3-phosphocholine + CoA. The enzyme catalyses (9Z,12Z)-octadecadienoyl-CoA + 1-hexadecanoyl-sn-glycero-3-phosphocholine = 1-hexadecanoyl-2-(9Z,12Z-octadecadienoyl)-sn-glycero-3-phosphocholine + CoA. The catalysed reaction is (4Z,7Z,10Z,13Z,16Z,19Z)-docosahexaenoyl-CoA + 1-hexadecanoyl-sn-glycero-3-phosphocholine = 1-hexadecanoyl-2-(4Z,7Z,10Z,13Z,16Z,19Z-docosahexaenoyl)-sn-glycero-3-phosphocholine + CoA. It catalyses the reaction 1-hexadecanoyl-sn-glycero-3-phosphocholine + acetyl-CoA = 1-hexadecanoyl-2-acetyl-sn-glycero-3-phosphocholine + CoA. It carries out the reaction eicosanoyl-CoA + 1-hexadecanoyl-sn-glycero-3-phosphocholine = 1-hexadecanoyl-2-eicosanoyl-sn-glycero-3-phosphocholine + CoA. The enzyme catalyses 1-O-hexadecyl-sn-glycero-3-phosphocholine + acetyl-CoA = 1-O-hexadecyl-2-acetyl-sn-glycero-3-phosphocholine + CoA. The catalysed reaction is a 1-acyl-sn-glycero-3-phosphocholine + hexadecanoyl-CoA = 1-acyl-2-hexadecanoyl-sn-glycero-3-phosphocholine + CoA. It catalyses the reaction a 1-acyl-sn-glycero-3-phosphate + hexadecanoyl-CoA = 1-acyl-2-hexadecanoyl-sn-glycero-3-phosphate + CoA. It carries out the reaction 1-acyl-sn-glycero-3-phospho-(1'-sn-glycerol) + hexadecanoyl-CoA = 1-acyl-2-hexadecanoyl-sn-glycero-3-phospho-(1'-sn-glycerol) + CoA. Its pathway is lipid metabolism; phospholipid metabolism. In terms of biological role, exhibits acyltransferase activity. Exhibits acetyltransferase activity. Activity is calcium-independent. Catalyzes the conversion of lysophosphatidylcholine (1-acyl-sn-glycero-3-phosphocholine or LPC) into phosphatidylcholine (1,2-diacyl-sn-glycero-3-phosphocholine or PC). Catalyzes the conversion 1-acyl-sn-glycerol-3-phosphate (lysophosphatidic acid or LPA) into 1,2-diacyl-sn-glycerol-3-phosphate (phosphatidic acid or PA) by incorporating an acyl moiety at the sn-2 position of the glycerol backbone. Displays a clear preference for saturated fatty acyl-CoAs, and 1-myristoyl or 1-palmitoyl LPC as acyl donors and acceptors, respectively. Involved in platelet-activating factor (PAF) biosynthesis by catalyzing the conversion of the PAF precursor, 1-O-alkyl-sn-glycero-3-phosphocholine (lyso-PAF) into 1-O-alkyl-2-acetyl-sn-glycero-3-phosphocholine (PAF). May synthesize phosphatidylcholine in pulmonary surfactant, thereby playing a pivotal role in respiratory physiology. Involved in the regulation of lipid droplet number and size. In Homo sapiens (Human), this protein is Lysophosphatidylcholine acyltransferase 1 (LPCAT1).